A 465-amino-acid chain; its full sequence is Coumaroyl-CoA:anthocyanidin 3-O-glucoside-6''-O-coumaroyltransferase 2 (465 aa).

Methionine 1 bears the N-acetylmethionine mark. Catalysis depends on proton acceptor residues histidine 173 and aspartate 406.

This sequence belongs to the plant acyltransferase family. Highly expressed in flowers, and leaves. Lower levels of expression in stems, roots and siliques.

Involved in the acylation of the 6'' position of the 3-O-glucose residue of anthocyanin. Also able to use flavonol 3-glucosides as the acyl acceptor. This chain is Coumaroyl-CoA:anthocyanidin 3-O-glucoside-6''-O-coumaroyltransferase 2 (3AT2), found in Arabidopsis thaliana (Mouse-ear cress).